We begin with the raw amino-acid sequence, 172 residues long: Adenine phosphoribosyltransferase (172 aa).

Belongs to the purine/pyrimidine phosphoribosyltransferase family. In terms of assembly, homodimer.

It is found in the cytoplasm. It catalyses the reaction AMP + diphosphate = 5-phospho-alpha-D-ribose 1-diphosphate + adenine. It participates in purine metabolism; AMP biosynthesis via salvage pathway; AMP from adenine: step 1/1. Catalyzes a salvage reaction resulting in the formation of AMP, that is energically less costly than de novo synthesis. This is Adenine phosphoribosyltransferase from Exiguobacterium sp. (strain ATCC BAA-1283 / AT1b).